A 381-amino-acid chain; its full sequence is Lipid-A-disaccharide synthase (381 aa).

This sequence belongs to the LpxB family.

It catalyses the reaction a lipid X + a UDP-2-N,3-O-bis[(3R)-3-hydroxyacyl]-alpha-D-glucosamine = a lipid A disaccharide + UDP + H(+). Its pathway is bacterial outer membrane biogenesis; LPS lipid A biosynthesis. Functionally, condensation of UDP-2,3-diacylglucosamine and 2,3-diacylglucosamine-1-phosphate to form lipid A disaccharide, a precursor of lipid A, a phosphorylated glycolipid that anchors the lipopolysaccharide to the outer membrane of the cell. In Solibacter usitatus (strain Ellin6076), this protein is Lipid-A-disaccharide synthase.